Reading from the N-terminus, the 508-residue chain is Aldehyde dehydrogenase (508 aa).

Active-site residues include E264 and C303.

The protein belongs to the aldehyde dehydrogenase family.

It catalyses the reaction acetaldehyde + NAD(+) + H2O = acetate + NADH + 2 H(+). It functions in the pathway organosulfur degradation. In terms of biological role, catalyzes the NAD(+)-dependent oxidation of acetaldehyde to acetate. This chain is Aldehyde dehydrogenase, found in Paracoccus denitrificans (strain Pd 1222).